A 218-amino-acid polypeptide reads, in one-letter code: Small ribosomal subunit protein uS3c (218 aa).

The region spanning 47–118 (VQKNMRISSG…RLNIAITRVA (72 aa)) is the KH type-2 domain.

Belongs to the universal ribosomal protein uS3 family. In terms of assembly, part of the 30S ribosomal subunit.

Its subcellular location is the plastid. It localises to the chloroplast. This Calycanthus floridus var. glaucus (Eastern sweetshrub) protein is Small ribosomal subunit protein uS3c (rps3).